The chain runs to 174 residues: Shikimate kinase (174 aa).

10–15 (GSGKTA) serves as a coordination point for ATP. Threonine 14 is a binding site for Mg(2+). Substrate contacts are provided by aspartate 32, arginine 56, and glycine 78. Residue arginine 118 participates in ATP binding. Arginine 137 provides a ligand contact to substrate. Arginine 154 is a binding site for ATP.

The protein belongs to the shikimate kinase family. As to quaternary structure, monomer. The cofactor is Mg(2+).

Its subcellular location is the cytoplasm. The catalysed reaction is shikimate + ATP = 3-phosphoshikimate + ADP + H(+). It participates in metabolic intermediate biosynthesis; chorismate biosynthesis; chorismate from D-erythrose 4-phosphate and phosphoenolpyruvate: step 5/7. Functionally, catalyzes the specific phosphorylation of the 3-hydroxyl group of shikimic acid using ATP as a cosubstrate. The chain is Shikimate kinase from Symbiobacterium thermophilum (strain DSM 24528 / JCM 14929 / IAM 14863 / T).